Reading from the N-terminus, the 326-residue chain is Acetyl-coenzyme A carboxylase carboxyl transferase subunit alpha (326 aa).

The CoA carboxyltransferase C-terminal domain occupies 45–298; the sequence is LEARAMQLRE…KQVLLENLDE (254 aa).

It belongs to the AccA family. Acetyl-CoA carboxylase is a heterohexamer composed of biotin carboxyl carrier protein (AccB), biotin carboxylase (AccC) and two subunits each of ACCase subunit alpha (AccA) and ACCase subunit beta (AccD).

Its subcellular location is the cytoplasm. The enzyme catalyses N(6)-carboxybiotinyl-L-lysyl-[protein] + acetyl-CoA = N(6)-biotinyl-L-lysyl-[protein] + malonyl-CoA. The protein operates within lipid metabolism; malonyl-CoA biosynthesis; malonyl-CoA from acetyl-CoA: step 1/1. In terms of biological role, component of the acetyl coenzyme A carboxylase (ACC) complex. First, biotin carboxylase catalyzes the carboxylation of biotin on its carrier protein (BCCP) and then the CO(2) group is transferred by the carboxyltransferase to acetyl-CoA to form malonyl-CoA. This Nostoc punctiforme (strain ATCC 29133 / PCC 73102) protein is Acetyl-coenzyme A carboxylase carboxyl transferase subunit alpha.